The chain runs to 201 residues: Cytochrome c oxidase assembly protein CtaG (201 aa).

The Cytoplasmic segment spans residues 1–12; sequence MTDQGENEKKQR. A helical; Signal-anchor for type II membrane protein membrane pass occupies residues 13 to 35; sequence RSNATIAVACLSFFVCMIGAAYA. The Periplasmic segment spans residues 36–201; the sequence is SVPLYRIFCQ…KAVGSTRNGG (166 aa).

It belongs to the COX11/CtaG family.

It localises to the cell inner membrane. In terms of biological role, exerts its effect at some terminal stage of cytochrome c oxidase synthesis, probably by being involved in the insertion of the copper B into subunit I. The chain is Cytochrome c oxidase assembly protein CtaG from Brucella suis biovar 1 (strain 1330).